Here is a 332-residue protein sequence, read N- to C-terminus: Phosphate acetyltransferase (332 aa).

It belongs to the phosphate acetyltransferase and butyryltransferase family.

Its subcellular location is the cytoplasm. It carries out the reaction acetyl-CoA + phosphate = acetyl phosphate + CoA. The protein operates within metabolic intermediate biosynthesis; acetyl-CoA biosynthesis; acetyl-CoA from acetate: step 2/2. This is Phosphate acetyltransferase (pta) from Acetivibrio thermocellus (strain ATCC 27405 / DSM 1237 / JCM 9322 / NBRC 103400 / NCIMB 10682 / NRRL B-4536 / VPI 7372) (Clostridium thermocellum).